The chain runs to 506 residues: Glucosidase 2 subunit beta (506 aa).

An N-terminal signal peptide occupies residues 1–23 (MKFSQWYTLTAPLLISSLYTVNA). Cys-86 and Cys-108 are joined by a disulfide. Coiled-coil stretches lie at residues 172 to 243 (SLVA…LYET) and 338 to 374 (ESYRRFEAAQRDLDAAEENEKSLEKEHTKLMHELEYH). The 196-residue stretch at 279-474 (ESCNNHLSML…KMKSPAACSP (196 aa)) folds into the MRH domain. Intrachain disulfides connect Cys-431–Cys-460 and Cys-445–Cys-472. Residues 503–506 (VDEL) carry the ER retrieval sequence motif.

As to quaternary structure, heterodimer of a catalytic subunit alpha (gls2) and a subunit beta (gtb1).

It is found in the endoplasmic reticulum. Functionally, subunit of glucosidase 2, which cleaves sequentially the 2 innermost alpha-1,3-linked glucose residues from the Glc(2)Man(9)GlcNAc(2) oligosaccharide precursor of immature glycoproteins in the endoplasmic reticulum (ER). Specifically required for the cleavage of the final glucose. The subunit beta retains the catalytic subunit alpha in the ER. The sequence is that of Glucosidase 2 subunit beta (gtb1) from Schizosaccharomyces pombe (strain 972 / ATCC 24843) (Fission yeast).